A 421-amino-acid polypeptide reads, in one-letter code: Putative transporter AmpG 3 (421 aa).

Transmembrane regions (helical) follow at residues 6–26, 41–61, 80–100, 104–124, 139–159, 166–186, 230–250, 274–294, 297–317, 324–344, 360–380, and 388–408; these read YLIGILLLGLISGLTFNLIFF, IIGAISLAAFPYCLKVIWSPF, WALVSQIFLILAMMWFLKRSP, LCITAIILFIIAFFSSTQDIV, LSIVFTFSSIGFRLGMLLGSV, IIFGWNTVYKFALFITMVGPI, LLLIILFVFLYKAADSIPMAM, LLIMIVGGTLGGILAAKIGIF, VLIGGVIQLLSPLMFMILATI, FIITITIQNFCSGFAGTIISI, AISASFSSLSRIILASLGGIC, and VFFLCNTLFSMLFIPIFYTIY.

This sequence belongs to the major facilitator superfamily.

Its subcellular location is the cell inner membrane. The polypeptide is Putative transporter AmpG 3 (ampG3) (Rickettsia prowazekii (strain Madrid E)).